A 420-amino-acid polypeptide reads, in one-letter code: Type II methyltransferase M.HgiCI (420 aa).

The 416-residue stretch at Leu-2–Ala-417 folds into the SAM-dependent MTase C5-type domain. Cys-75 is an active-site residue.

Belongs to the class I-like SAM-binding methyltransferase superfamily. C5-methyltransferase family.

It catalyses the reaction a 2'-deoxycytidine in DNA + S-adenosyl-L-methionine = a 5-methyl-2'-deoxycytidine in DNA + S-adenosyl-L-homocysteine + H(+). Functionally, a methylase that recognizes the double-stranded sequence 5'-GGYRCC-3', methylates C-5 on both strands, and protects the DNA from cleavage by the HgiCI endonuclease. The protein is Type II methyltransferase M.HgiCI (hgiCIM) of Herpetosiphon aurantiacus (Herpetosiphon giganteus).